Here is a 363-residue protein sequence, read N- to C-terminus: Ribonuclease P protein subunit p40 (363 aa).

As to quaternary structure, component of nuclear RNase P and RNase MRP ribonucleoproteins. RNase P consists of a catalytic RNA moiety and about 10 protein subunits; POP1, POP4, POP5, POP7, RPP14, RPP21, RPP25, RPP30, RPP38 and RPP40. Within the RNase P complex, POP1, POP7 and RPP25 form the 'finger' subcomplex, POP5, RPP14, RPP40 and homodimeric RPP30 form the 'palm' subcomplex, and RPP21, POP4 and RPP38 form the 'wrist' subcomplex. All subunits of the RNase P complex interact with the catalytic RNA. Several subunits of RNase P are also part of the RNase MRP complex. RNase MRP consists of a catalytic RNA moiety and about 8 protein subunits; POP1, POP7, RPP25, RPP30, RPP38, RPP40 and possibly also POP4 and POP5.

It is found in the nucleus. Its subcellular location is the nucleolus. Functionally, component of ribonuclease P, a ribonucleoprotein complex that generates mature tRNA molecules by cleaving their 5'-ends. Also a component of the MRP ribonuclease complex, which cleaves pre-rRNA sequences. This chain is Ribonuclease P protein subunit p40 (Rpp40), found in Rattus norvegicus (Rat).